A 193-amino-acid chain; its full sequence is Ion-translocating oxidoreductase complex subunit A (193 aa).

A run of 6 helical transmembrane segments spans residues 5–25 (VLLL…FLGL), 39–59 (IGMS…SYLV), 63–83 (ILIP…VIAV), 102–122 (LLGI…VALL), 134–154 (AVYG…FAAL), and 171–191 (SIAL…TGLV).

It belongs to the NqrDE/RnfAE family. The complex is composed of six subunits: RnfA, RnfB, RnfC, RnfD, RnfE and RnfG.

Its subcellular location is the cell inner membrane. Its function is as follows. Part of a membrane-bound complex that couples electron transfer with translocation of ions across the membrane. The sequence is that of Ion-translocating oxidoreductase complex subunit A from Pseudoalteromonas translucida (strain TAC 125).